Consider the following 1516-residue polypeptide: EF-hand calcium-binding domain-containing protein 6 (1516 aa).

The disordered stretch occupies residues 1–23 (MKRNGTRLNFAKANSTKSGSTRA). Residues 12–21 (KANSTKSGST) show a composition bias toward polar residues. EF-hand domains lie at 96–131 (SRRDDIKKVFQILDRNHNQMVTKGDLKRVITAFLIP), 197–232 (RNMRSIRKVFQVMDVNNTGLVQPQELRRVLETFCLR), 321–356 (KSYEKIEKALSAGDPSKGGYISLNYLKVVLDTFIYR), 444–462 (SGHITWEELRHILNCMVAK), and 528–563 (RNLQAFYSMLQSYDLRDTGTIGKNNFRKVMRVFCPY). Ca(2+) contacts are provided by D109, N111, N113, M115, D120, D210, N212, T214, and E221. Residues 618-638 (EEPGQQDERTQPSGEKTSEIN) are disordered. A compositionally biased stretch (polar residues) spans 628–638 (QPSGEKTSEIN). 6 EF-hand domains span residues 674–690 (KINQEEFRKVLERSGMP), 763–798 (ESFRDVYSAFFRIDLDRDGIISMHDFHRLLQYLQLN), 905–940 (LTPREFEKLWQNYDTEGRGYITYQEFLHRLGIRYSP), 1086–1121 (SSQPALVEAFSALDKEDTGFVKAMEFGDVLRSVCQK), 1193–1228 (SHYHTIVQEFENFDTLKSNTVSRDEFRSICTRHIQI), and 1229–1264 (LTDEQFDRLWSELPVNAKGRLKYQDFLSKLSIERVP). D776, D778, D780, and D787 together coordinate Ca(2+). T906 carries the phosphothreonine modification. The segment at 1263–1318 (VPSPPMAAGDSGESTMAQRGSSAPEFSQGTRSNLYSPPRDSRVGLKSRSHPCTPVG) is disordered. At S1265 the chain carries Phosphoserine. The span at 1274-1297 (GESTMAQRGSSAPEFSQGTRSNLY) shows a compositional bias: polar residues. A Phosphoserine modification is found at S1311. 2 positions are modified to phosphothreonine: T1315 and T1319. The tract at residues 1318-1516 (GTPPLQNCEP…YNDFLRAFLQ (199 aa)) is interaction with PARK7. 4 EF-hand domains span residues 1348 to 1373 (KEKDTDKQGTISAAEFLALVEKFKLD), 1374 to 1409 (ISREESQQLIVKYDLKNNGKFAYCDFIQSCVLLLKA), 1454 to 1484 (MRRSFKTYDKNGTGLLSVADFRKVLRQYSIN), and 1485 to 1516 (LSEEEFFHVLEYYDKSLSSKISYNDFLRAFLQ). The tract at residues 1422-1516 (NADKMKEAGM…YNDFLRAFLQ (95 aa)) is interaction with AR. Ca(2+) contacts are provided by D1462, N1464, T1466, and D1473.

As to quaternary structure, microtubule inner protein component of sperm flagellar doublet microtubules. Binds PARK7. Part of a ternary complex containing PARK7, EFCAB6/DJBP and AR.

The protein resides in the nucleus. It is found in the cytoplasm. The protein localises to the cytoskeleton. It localises to the flagellum axoneme. Its function is as follows. Negatively regulates the androgen receptor by recruiting histone deacetylase complex, and protein DJ-1 antagonizes this inhibition by abrogation of this complex. Microtubule inner protein (MIP) part of the dynein-decorated doublet microtubules (DMTs) in cilia axoneme, which is required for motile cilia beating. The protein is EF-hand calcium-binding domain-containing protein 6 (Efcab6) of Mus musculus (Mouse).